The chain runs to 322 residues: Malate dehydrogenase (322 aa).

NAD(+)-binding positions include G10 to G15 and D34. R83 and R89 together coordinate substrate. NAD(+) is bound by residues N96 and I119 to N121. Substrate is bound by residues N121 and R152. Residue H176 is the Proton acceptor of the active site.

This sequence belongs to the LDH/MDH superfamily. MDH type 3 family.

It carries out the reaction (S)-malate + NAD(+) = oxaloacetate + NADH + H(+). Functionally, catalyzes the reversible oxidation of malate to oxaloacetate. The sequence is that of Malate dehydrogenase from Rhodopseudomonas palustris (strain HaA2).